Reading from the N-terminus, the 800-residue chain is MGGVTMKNNLKKYIKYILSVILVFFVGVNGMEVYALEESRDVYLSDLDWLNATHGDDTKSKIVQKNHPFTPGNNNQSTKISLKMEDGSISEFEKGLGTIAGSPSTITYDISGAGVTKFFSYLGIDRSANPINEQYAKVDKIEVVVDGKVIYSTINQFPNGLTYETPAIKVDLNIPENAKRLQLKSYAGEKTWGDEVVYADAKFTAKGDFVNPNDWTPAEKRREISNEKPLLMIPLYANGSKYEKGDYAFWGDDTLVGKWKEVPDDLKPYTVIQLHPDDLPKRDGVAADFYEHMLNEAQSYVNPKTNKNEPIPIVLTVYTAGNVPGYTAAHWLTTEWIEDMYSKYSALQGVFSTENYWVWTDNVESNAAEYLKLSAKYGGYFIWSEQNNGGSIEKAFGSNGKTVFKEAVEKYWENFIFMYKNTPQAEGNDAPTSSYMTGLWLTDYAYQWGGLMDTWKWYETGKWKLFESGNIGKTQGNRQWLTEPEALLGIEAMNIYLNGGCVYNFEHPAYTYGVRNEESPLFSNVIKEFFRYVINNPSPSKNEMRAKTKSLLYGNFTQNGNGNYFVGLNTEMSQSPAYTTGRYGNIPAVPSSIERNKIESRLSGSQIKLIDMNSSELSNITNRKEYFNKLYKEEYNGNIFAQKLDNRWFIYNYKYNENINQKGSFDIANIKSEVTLEPHTYLIMEDNNQSINIKLNNYRTNKDSLWEGAKNADEAKKLPEMSKVDALNWVYDSYIKNTNNGEKRTSVIKLMNIDKAPTITNVNGIEGSYDIPTVKYNSETRSAEITIKNNGNIDFDIVIK.

The first 35 residues, 1–35 (MGGVTMKNNLKKYIKYILSVILVFFVGVNGMEVYA), serve as a signal peptide directing secretion.

Belongs to the glycosyl hydrolase 98 family.

The protein localises to the secreted. It catalyses the reaction Endohydrolysis of (1-&gt;4)-beta-D-galactosidic linkages in blood group A and B substances.. In terms of biological role, endo-beta-galactosidase capable of releasing both the blood group A trisaccharide (A-Tri; GalNAcalpha1--&gt;3(Fucalpha1--&gt;2)Gal) and B trisaccharide (B-Tri; Galalpha1--&gt;3(Fucalpha1--&gt;2)Gal) glycotopes from blood group A- and B-containing glycoconjugates, respectively. In Clostridium perfringens, this protein is Blood-group-substance endo-1,4-beta-galactosidase (eabC).